A 136-amino-acid polypeptide reads, in one-letter code: Group 1 truncated hemoglobin GlbN (136 aa).

H81 contacts heme.

The protein belongs to the truncated hemoglobin family. Group I subfamily. As to quaternary structure, homodimer. Heme is required as a cofactor.

Its function is as follows. Binds oxygen cooperatively with very high affinity because of a fast combination and a slow dissociation rate. The chain is Group 1 truncated hemoglobin GlbN (glbN) from Mycolicibacterium paratuberculosis (strain ATCC BAA-968 / K-10) (Mycobacterium paratuberculosis).